The primary structure comprises 127 residues: CDGSH iron-sulfur domain-containing protein 3, mitochondrial (127 aa).

The transit peptide at 1-14 directs the protein to the mitochondrion; that stretch reads MRGAGAILRPAARG. N6-acetyllysine; alternate is present on Lys-55. An N6-succinyllysine; alternate modification is found at Lys-55. Positions 60, 62, 71, and 75 each coordinate [2Fe-2S] cluster. Residue Lys-86 is modified to N6-acetyllysine. Residues Cys-98, Cys-100, Cys-109, and His-113 each contribute to the [2Fe-2S] cluster site.

It belongs to the CISD protein family. As to quaternary structure, monomer. Requires [2Fe-2S] cluster as cofactor.

The protein resides in the mitochondrion. Can transfer its iron-sulfur clusters to the apoferrodoxins FDX1 and FDX2. Contributes to mitochondrial iron homeostasis and in maintaining normal levels of free iron and reactive oxygen species, and thereby contributes to normal mitochondrial function. In Homo sapiens (Human), this protein is CDGSH iron-sulfur domain-containing protein 3, mitochondrial (CISD3).